The following is a 291-amino-acid chain: MFQKHLQKASDSVVGGTLYVVATPIGNLADITLRALAVLQKADIICAEDTRVTAQLLSAYGIQGKLVSVREHNERQMADKIVGYLSDGMVVAQVSDAGTPAVCDPGAKLARRVREVGFKVVPVVGASAVMAALSVAGVAGSDFYFNGFVPPKSGERRKLFAKWVRVAFPVVMFETPHRIGATLADMAELFPERRLMLAREITKTFETFLSGTVGEIQTALAADGNQSRGEMVLVLYPAQDEKHEGLSESAQNIMKILTAELPTKQAAELAAKITGEGKKALYDLALSWKNK.

The protein belongs to the methyltransferase superfamily. RsmI family.

Its subcellular location is the cytoplasm. It carries out the reaction cytidine(1402) in 16S rRNA + S-adenosyl-L-methionine = 2'-O-methylcytidine(1402) in 16S rRNA + S-adenosyl-L-homocysteine + H(+). In terms of biological role, catalyzes the 2'-O-methylation of the ribose of cytidine 1402 (C1402) in 16S rRNA. This Neisseria meningitidis serogroup A / serotype 4A (strain DSM 15465 / Z2491) protein is Ribosomal RNA small subunit methyltransferase I.